Consider the following 862-residue polypeptide: Probable inorganic carbon transporter subunit DabA (862 aa).

Zn(2+) is bound by residues Cys-365, Asp-367, His-540, and Cys-555.

It belongs to the inorganic carbon transporter (TC 9.A.2) DabA family. As to quaternary structure, forms a complex with DabB. Requires Zn(2+) as cofactor.

It is found in the cell inner membrane. Functionally, part of an energy-coupled inorganic carbon pump. This chain is Probable inorganic carbon transporter subunit DabA, found in Vibrio cholerae serotype O1 (strain ATCC 39315 / El Tor Inaba N16961).